Consider the following 116-residue polypeptide: Aspartate 1-decarboxylase (116 aa).

Residue Ser25 is the Schiff-base intermediate with substrate; via pyruvic acid of the active site. Pyruvic acid (Ser) is present on Ser25. Thr57 contacts substrate. The active-site Proton donor is the Tyr58. Gly73 to Ala75 is a binding site for substrate.

Belongs to the PanD family. As to quaternary structure, heterooctamer of four alpha and four beta subunits. Requires pyruvate as cofactor. Is synthesized initially as an inactive proenzyme, which is activated by self-cleavage at a specific serine bond to produce a beta-subunit with a hydroxyl group at its C-terminus and an alpha-subunit with a pyruvoyl group at its N-terminus.

It localises to the cytoplasm. The catalysed reaction is L-aspartate + H(+) = beta-alanine + CO2. Its pathway is cofactor biosynthesis; (R)-pantothenate biosynthesis; beta-alanine from L-aspartate: step 1/1. Catalyzes the pyruvoyl-dependent decarboxylation of aspartate to produce beta-alanine. The chain is Aspartate 1-decarboxylase from Leptospira borgpetersenii serovar Hardjo-bovis (strain JB197).